The primary structure comprises 488 residues: MTQDVEMKDNNTPSQSIISSSTSTMQNLKEIAALIDTGSYTKEVRRIARAVRLTIGLRQKLTGSVLSSFLDFALVPGSEAHSRLSSFVPKGDEHDMEVDTASSATQAAPSKHLPAELEIYCYFIVLLFLIDQKKYNEAKACSSASIARLKNVNRRTIDVIASRLYFYYSLSYEQTGDLAEIRGTLLALHHSATLRHDELGQETLLNLLLRNYLHYNLYDQAEKLRSKAPRFEAHSNQQFCRYLFYLGKIRTIQLEYTDAKESLLQAARKAPIAALGFRIQCNKWAILVRLLLGEIPERSIFTQKGMEKALRPYFELTNAVRIGDLELFRTVQEKFLDTFAQDRTHNLIVRLRHNVIRTGLRNISISYSRISLPDVAKKLRLNSENPVADAESIVAKAIRDGAIDATIDHKNGCMVSKETGDIYSTNEPQTAFNSRIAFCLNMHNEAVRALRFPPNTHKEKESDEKRRERKQQEEELAKHMAEEDDDDF.

The PCI domain maps to 240-421 (CRYLFYLGKI…GCMVSKETGD (182 aa)). A disordered region spans residues 451–488 (RFPPNTHKEKESDEKRRERKQQEEELAKHMAEEDDDDF). Over residues 456–481 (THKEKESDEKRRERKQQEEELAKHMA) the composition is skewed to basic and acidic residues.

Belongs to the proteasome subunit S3 family. As to quaternary structure, component of the 19S regulatory particle (RP/PA700) lid subcomplex of the 26S proteasome. The 26S proteasome is composed of a core protease (CP), known as the 20S proteasome, capped at one or both ends by the 19S regulatory particle (RP/PA700). The RP/PA700 complex is composed of at least 17 different subunits in two subcomplexes, the base and the lid, which form the portions proximal and distal to the 20S proteolytic core, respectively. Interacts with UCH1 and UCH2. As to expression, ubiquitous with highest expression in flowers.

In terms of biological role, acts as a regulatory subunit of the 26 proteasome which is involved in the ATP-dependent degradation of ubiquitinated proteins. This Arabidopsis thaliana (Mouse-ear cress) protein is 26S proteasome non-ATPase regulatory subunit 3 homolog A.